Here is a 355-residue protein sequence, read N- to C-terminus: Syntaxin-5 (355 aa).

The Cytoplasmic segment spans residues 1–333; it reads MIPRKRYGSK…KYFQSVTSNR (333 aa). Residues 245-247 carry the IxM motif; signal for cargo packaging into COPII-coated vesicles motif; the sequence is IDM. Positions 263 to 325 constitute a t-SNARE coiled-coil homology domain; it reads DSYIQSRADT…EAAHSEILKY (63 aa). Positions 287–318 form a coiled coil; sequence FQQLAHMVKEQEETIQRIDENVLGAQLDVEAA. A helical; Anchor for type IV membrane protein membrane pass occupies residues 334-354; the sequence is WLMVKIFLILIVFFIIFVVFL. Residue Ala-355 is a topological domain, vesicular.

Belongs to the syntaxin family. In terms of assembly, part of a ternary complex containing STX5A, NSFL1C and VCP. Part of a unique SNARE complex composed of the Golgi SNAREs GOSR1, GOSR2, YKT6 and VTI1A. Component of a SNARE complex consisting of STX5, YKT6, GOSR1 and BET1L. Interacts with BET1L. Interacts with BET1. Interacts with COG4. Interacts with GM130/GOLGA2. Interacts (via IxM motif) with SEC24C and SEC24D; mediates STX5 packaging into COPII-coated vesicles. Interacts with VLDLR; this interaction mediates VLDLR translocation from the endoplasmic reticulum to the plasma membrane.

It is found in the endoplasmic reticulum-Golgi intermediate compartment membrane. It localises to the golgi apparatus membrane. Functionally, mediates endoplasmic reticulum to Golgi transport. Together with p115/USO1 and GM130/GOLGA2, involved in vesicle tethering and fusion at the cis-Golgi membrane to maintain the stacked and inter-connected structure of the Golgi apparatus. In terms of biological role, required for Golgi to endoplasmic reticulum retrogade transport, and for intra-Golgi transport. The sequence is that of Syntaxin-5 (Stx5) from Mus musculus (Mouse).